The chain runs to 359 residues: Probable tyrosine-protein phosphatase pir-2 (359 aa).

Positions 16–191 (QPVGNVIPRT…AKDKRDKQVD (176 aa)) constitute a Tyrosine-protein phosphatase domain. Cysteine 131 acts as the Phosphocysteine intermediate in catalysis. A compositionally biased stretch (basic and acidic residues) spans 184-199 (DKRDKQVDSDSDSSER). Disordered stretches follow at residues 184 to 211 (DKRD…KHRE), 234 to 259 (SVSG…PHHW), and 274 to 328 (PVAN…RNRM). Positions 200-210 (QRKKKNKRKHR) are enriched in basic residues. Residues 234–246 (SVSGTDYQNSPNG) show a composition bias toward polar residues. A compositionally biased stretch (acidic residues) spans 290–309 (PQEEEEFEEDFEEIEEETET). A compositionally biased stretch (basic residues) spans 319–328 (SKRRARRNRM).

The protein belongs to the protein-tyrosine phosphatase family. Non-receptor class CDC14 subfamily.

The enzyme catalyses O-phospho-L-tyrosyl-[protein] + H2O = L-tyrosyl-[protein] + phosphate. The chain is Probable tyrosine-protein phosphatase pir-2 from Caenorhabditis elegans.